The sequence spans 516 residues: Probable metalloreductase AIM14 (516 aa).

The next 7 helical transmembrane spans lie at 18–38 (IGYG…LLLL), 64–84 (LHLP…YSVI), 97–117 (LSYV…YILS), 128–148 (HMWL…AFVI), 168–188 (LLGF…TGVI), 195–215 (SFYM…PVHA), and 217–237 (PGVA…HALA). Residues 94–207 (LGRLSYVLLF…MVHQINAFAI (114 aa)) enclose the Ferric oxidoreductase domain. One can recognise an FAD-binding FR-type domain in the interval 238–363 (RVSFCMSSAV…GGTGISLGLP (126 aa)).

The protein belongs to the ferric reductase (FRE) family. AIM14 subfamily.

It is found in the membrane. Functionally, probable cell surface metalloreductase. May be involved in iron or copper homeostasis. This chain is Probable metalloreductase AIM14 (AIM14), found in Eremothecium gossypii (strain ATCC 10895 / CBS 109.51 / FGSC 9923 / NRRL Y-1056) (Yeast).